A 784-amino-acid polypeptide reads, in one-letter code: Alpha-catulin (784 aa).

Positions 35–247 (IKTKSIEQTL…LLLTASKTYL (213 aa)) are vinculin/alpha-catenin homology 1 (VH1) region. A coiled-coil region spans residues 387–414 (ASGLEVTVERLNRRLKDLSKQLQIVAME). The tract at residues 552–696 (PRPGKHGTTQ…MVKSPTVGKT (145 aa)) is vinculin/alpha-catenin homology 2 (VH2) region. Residues 737–784 (GSVNGRTGADGERTSRESTVWRRTPSIRRAAPPTSSHLSANNSSSIHI) form a disordered region. Residues 745-756 (ADGERTSRESTV) are compositionally biased toward basic and acidic residues. The segment covering 771 to 784 (SSHLSANNSSSIHI) has biased composition (low complexity).

The protein belongs to the vinculin/alpha-catenin family. In terms of assembly, interacts with slo-1 (via C-terminus); the interaction is required for localization of slo-1 to dense bodies in body wall muscle cells. Interacts (via N-terminus) with dystrophin complex member dyb-1 (via C-terminus); the interaction is required for localization of the dystrophin complex and ctn-1 near dense bodies in muscle cells. Expressed in body wall muscles, vulval muscles, stomatointestinal cells and pharyngeal muscle cells. Expressed in enteric muscles, nerve ring neurons and in the ventral nerve cord.

Its subcellular location is the cytoplasm. Its function is as follows. Required for slo-1 potassium ion channel clustering at presynaptic terminals and in egg-laying muscles; clustering of slo-1 mediates the intoxicating and sedatory effects of ethanol on worms. Required for slo-1 localization to dense bodies in body wall muscle cells. Maintains the localization of the dystrophin complex near muscle cell dense bodies via its interaction with complex member dyb-1 which is required for slo-1 localization in muscle while slo-1 localization in neurons is independent of the dystrophin complex. This chain is Alpha-catulin, found in Caenorhabditis elegans.